Reading from the N-terminus, the 217-residue chain is Large ribosomal subunit protein eL6 (217 aa).

Belongs to the eukaryotic ribosomal protein eL6 family. As to quaternary structure, component of the large ribosomal subunit. May bind IPO9 with low affinity.

The protein resides in the cytoplasm. Its subcellular location is the cytosol. It localises to the rough endoplasmic reticulum. Component of the large ribosomal subunit. This is Large ribosomal subunit protein eL6 (rpl-6) from Caenorhabditis elegans.